The sequence spans 73 residues: RNA-binding protein Hfq (73 aa).

In terms of domain architecture, Sm spans 8–68; it reads DQFLNQIRKE…ISTFAPQKNV (61 aa).

The protein belongs to the Hfq family. As to quaternary structure, homohexamer.

Functionally, RNA chaperone that binds small regulatory RNA (sRNAs) and mRNAs to facilitate mRNA translational regulation in response to envelope stress, environmental stress and changes in metabolite concentrations. Also binds with high specificity to tRNAs. The polypeptide is RNA-binding protein Hfq (Bacillus licheniformis (strain ATCC 14580 / DSM 13 / JCM 2505 / CCUG 7422 / NBRC 12200 / NCIMB 9375 / NCTC 10341 / NRRL NRS-1264 / Gibson 46)).